We begin with the raw amino-acid sequence, 565 residues long: Mediator of RNA polymerase II transcription subunit 17 (565 aa).

The span at 138–152 (TSLNSDRLGQDSNDN) shows a compositional bias: polar residues. The segment at 138–160 (TSLNSDRLGQDSNDNQESKATDS) is disordered.

The protein belongs to the Mediator complex subunit 17 family. In terms of assembly, component of the Mediator complex.

The protein resides in the nucleus. In terms of biological role, component of the Mediator complex, a coactivator involved in the regulated transcription of nearly all RNA polymerase II-dependent genes. Mediator functions as a bridge to convey information from gene-specific regulatory proteins to the basal RNA polymerase II transcription machinery. Mediator is recruited to promoters by direct interactions with regulatory proteins and serves as a scaffold for the assembly of a functional preinitiation complex with RNA polymerase II and the general transcription factors. The polypeptide is Mediator of RNA polymerase II transcription subunit 17 (SRB4) (Candida albicans (strain SC5314 / ATCC MYA-2876) (Yeast)).